A 420-amino-acid chain; its full sequence is Gamma-glutamyl phosphate reductase (420 aa).

This sequence belongs to the gamma-glutamyl phosphate reductase family.

The protein localises to the cytoplasm. It carries out the reaction L-glutamate 5-semialdehyde + phosphate + NADP(+) = L-glutamyl 5-phosphate + NADPH + H(+). It functions in the pathway amino-acid biosynthesis; L-proline biosynthesis; L-glutamate 5-semialdehyde from L-glutamate: step 2/2. Functionally, catalyzes the NADPH-dependent reduction of L-glutamate 5-phosphate into L-glutamate 5-semialdehyde and phosphate. The product spontaneously undergoes cyclization to form 1-pyrroline-5-carboxylate. The polypeptide is Gamma-glutamyl phosphate reductase (Shewanella amazonensis (strain ATCC BAA-1098 / SB2B)).